The sequence spans 318 residues: Pantothenate synthetase (318 aa).

44–51 (MGALHQGH) is a binding site for ATP. H51 serves as the catalytic Proton donor. Residue Q75 participates in (R)-pantoate binding. A beta-alanine-binding site is contributed by Q75. Residue 161-164 (GEKD) participates in ATP binding. Residue Q167 participates in (R)-pantoate binding. ATP-binding positions include V190 and 198–201 (LSSR). The disordered stretch occupies residues 295–318 (DGHPNLDSQPEPAGTDPALLPPAR).

Belongs to the pantothenate synthetase family. In terms of assembly, homodimer.

It is found in the cytoplasm. It carries out the reaction (R)-pantoate + beta-alanine + ATP = (R)-pantothenate + AMP + diphosphate + H(+). It functions in the pathway cofactor biosynthesis; (R)-pantothenate biosynthesis; (R)-pantothenate from (R)-pantoate and beta-alanine: step 1/1. Catalyzes the condensation of pantoate with beta-alanine in an ATP-dependent reaction via a pantoyl-adenylate intermediate. This Nocardia farcinica (strain IFM 10152) protein is Pantothenate synthetase.